The primary structure comprises 176 residues: MSRVAKAPVAIPAGVEVTLNEQTITVKGTKGSLTRVINSDVSVVVEDNEIKCSPVESAKTAAQAGTARALINNMVVGVTEGFVKKLTLVGVGYRAKLAGKDIDLTLGFSHPLVHKLPDGVTAECPSQTEIVLSGTDKQLIGQVAAEIRGYRPPEPYKGKGVRYADEQVRRKEAKKK.

The segment covering 151–170 has biased composition (basic and acidic residues); sequence RPPEPYKGKGVRYADEQVRR. Residues 151 to 176 are disordered; the sequence is RPPEPYKGKGVRYADEQVRRKEAKKK.

The protein belongs to the universal ribosomal protein uL6 family. In terms of assembly, part of the 50S ribosomal subunit.

Its function is as follows. This protein binds to the 23S rRNA, and is important in its secondary structure. It is located near the subunit interface in the base of the L7/L12 stalk, and near the tRNA binding site of the peptidyltransferase center. This Shewanella halifaxensis (strain HAW-EB4) protein is Large ribosomal subunit protein uL6.